A 209-amino-acid polypeptide reads, in one-letter code: Casparian strip membrane protein 1 (209 aa).

Positions 1 to 35 (MKTGESTAIDIAPETNNSGPIGKKKSTTPLLAAPV) are disordered. At 1–46 (MKTGESTAIDIAPETNNSGPIGKKKSTTPLLAAPVPDRGTHRMKRG) the chain is on the cytoplasmic side. Residues 47 to 67 (LAIFDFVLRIGVLASALAAAA) traverse the membrane as a helical segment. Over 68 to 96 (AMGTSEQTLPFFTQFFQFEASYDDLPTFQ) the chain is Extracellular. The helical transmembrane segment at 97 to 117 (FFVVAMAVVAGYVVLSIPFSI) threads the bilayer. At 118 to 129 (VCIIRPHAAGPR) the chain is on the cytoplasmic side. Residues 130–150 (VLLLILDSVALTLNTAAAGAA) form a helical membrane-spanning segment. At 151–182 (AAVVSLAHSGNSSTNWLAICNQFGDFCQQASG) the chain is on the extracellular side. N161 carries an N-linked (GlcNAc...) asparagine glycan. The chain crosses the membrane as a helical span at residues 183 to 203 (AVVGSFAAVLLFLLLILFSAL). Topologically, residues 204-209 (SLKNSH) are cytoplasmic.

Belongs to the Casparian strip membrane proteins (CASP) family. In terms of assembly, homodimer and heterodimers.

The protein localises to the cell membrane. Regulates membrane-cell wall junctions and localized cell wall deposition. Required for establishment of the Casparian strip membrane domain (CSD) and the subsequent formation of Casparian strips, a cell wall modification of the root endodermis that determines an apoplastic barrier between the intraorganismal apoplasm and the extraorganismal apoplasm and prevents lateral diffusion. In Cucumis melo (Muskmelon), this protein is Casparian strip membrane protein 1.